The following is a 418-amino-acid chain: Putative competence-damage inducible protein (418 aa).

The protein belongs to the CinA family.

The polypeptide is Putative competence-damage inducible protein (Streptococcus pneumoniae serotype 19F (strain G54)).